We begin with the raw amino-acid sequence, 195 residues long: Peptidyl-tRNA hydrolase (195 aa).

Position 17 (Tyr17) interacts with tRNA. Residue His22 is the Proton acceptor of the active site. Tyr68, Asn70, and Asn116 together coordinate tRNA.

The protein belongs to the PTH family. As to quaternary structure, monomer.

It localises to the cytoplasm. The enzyme catalyses an N-acyl-L-alpha-aminoacyl-tRNA + H2O = an N-acyl-L-amino acid + a tRNA + H(+). In terms of biological role, hydrolyzes ribosome-free peptidyl-tRNAs (with 1 or more amino acids incorporated), which drop off the ribosome during protein synthesis, or as a result of ribosome stalling. Its function is as follows. Catalyzes the release of premature peptidyl moieties from peptidyl-tRNA molecules trapped in stalled 50S ribosomal subunits, and thus maintains levels of free tRNAs and 50S ribosomes. The sequence is that of Peptidyl-tRNA hydrolase from Shewanella sp. (strain MR-4).